The primary structure comprises 258 residues: Synapse differentiation-inducing gene protein 1 (258 aa).

The Cytoplasmic segment spans residues 1–181 (MAGVVEQKSG…NFLVMPPRDH (181 aa)). At serine 137 the chain carries Phosphoserine. Residues 182–202 (LGLSVFSMLCCFWPLGIAAFY) traverse the membrane as a helical segment. The Extracellular segment spans residues 203–228 (LSHETNKAVAKGDFHQASTSSRRALF). The segment at residues 229-249 (LAVLSITIGTGIYVGVAVALI) is an intramembrane region (helical). The Extracellular portion of the chain corresponds to 250 to 258 (AYLSKSNHL).

The protein belongs to the CD225/Dispanin family. In terms of assembly, homodimer. Interacts with GRIA1 and GRIA2.

The protein localises to the cell membrane. Its subcellular location is the early endosome membrane. The protein resides in the postsynaptic density membrane. It localises to the synapse. It is found in the cell projection. The protein localises to the dendrite. Its subcellular location is the dendritic spine. Functionally, may regulate AMPA receptor content at nascent synapses, and have a role in postsynaptic development and maturation. In Bos taurus (Bovine), this protein is Synapse differentiation-inducing gene protein 1 (SYNDIG1).